The following is a 682-amino-acid chain: Protein SYG1 homolog (682 aa).

An SPX domain is found at 1-219 (MKFGKVIEGQ…HTDLQGFWVD (219 aa)). Over 1-274 (MKFGKVIEGQ…KEHFSANSMR (274 aa)) the chain is Cytoplasmic. Residues 275 to 295 (FGLLFGAGLPLAIEAACYYNA) traverse the membrane as a helical segment. At 296–300 (TEQSS) the chain is on the extracellular side. Residues 301–321 (YLLQIWGGFFLVIFAFVLFDL) form a helical membrane-spanning segment. The Cytoplasmic portion of the chain corresponds to 322-348 (DCYVWEKTRVNYMLIFEFNQRKSLNWR). Residues 349–369 (QHLEIVGAVFFIFSLFFFLCM) form a helical membrane-spanning segment. Topologically, residues 370-377 (RNFFPGFT) are extracellular. The chain crosses the membrane as a helical span at residues 378-398 (IYFPALFLGVVGTFLIAPVIV). Residues 399 to 406 (PYWRMRRY) lie on the Cytoplasmic side of the membrane. The helical transmembrane segment at 407-424 (LIIQLIRVFLSGLSTVHF) threads the bilayer. The Extracellular segment spans residues 425–426 (QD). The helical transmembrane segment at 427-447 (FFFADQMVSLTYACGNISLFF) threads the bilayer. At 448-525 (CLYKRLWRQP…WRIHPGLKYR (78 aa)) the chain is on the cytoplasmic side. The region spanning 459-654 (LCNSSHSPLL…VKPHSDVFVS (196 aa)) is the EXS domain. A helical membrane pass occupies residues 526–546 (VLYTIFAGVNSLFSYTWDILM). Residues 547–571 (DWNLLVRKDGRWQFREHRILKQLWP) are Extracellular-facing. Residues 572–592 (YIIAMILNFIVRSSFIFYCIF) traverse the membrane as a helical segment. Residues 593–682 (PNHIQHSSGI…QTDVDEAQFS (90 aa)) lie on the Cytoplasmic side of the membrane. The tract at residues 659–682 (SDKNYTDDEDSMDDQTDVDEAQFS) is disordered. A compositionally biased stretch (acidic residues) spans 665–682 (DDEDSMDDQTDVDEAQFS).

This sequence belongs to the SYG1 (TC 2.A.94) family.

Its subcellular location is the cell membrane. Functionally, may function in G-protein coupled signal transduction. This chain is Protein SYG1 homolog, found in Schizosaccharomyces pombe (strain 972 / ATCC 24843) (Fission yeast).